Consider the following 208-residue polypeptide: Thymidylate kinase (208 aa).

Position 9 to 16 (9 to 16 (GGEGCGKS)) interacts with ATP.

This sequence belongs to the thymidylate kinase family.

The catalysed reaction is dTMP + ATP = dTDP + ADP. Functionally, phosphorylation of dTMP to form dTDP in both de novo and salvage pathways of dTTP synthesis. The polypeptide is Thymidylate kinase (Dehalococcoides mccartyi (strain ATCC BAA-2100 / JCM 16839 / KCTC 5957 / BAV1)).